Reading from the N-terminus, the 477-residue chain is Proline--tRNA ligase (477 aa).

This sequence belongs to the class-II aminoacyl-tRNA synthetase family. ProS type 3 subfamily. As to quaternary structure, homodimer.

Its subcellular location is the cytoplasm. The catalysed reaction is tRNA(Pro) + L-proline + ATP = L-prolyl-tRNA(Pro) + AMP + diphosphate. Catalyzes the attachment of proline to tRNA(Pro) in a two-step reaction: proline is first activated by ATP to form Pro-AMP and then transferred to the acceptor end of tRNA(Pro). This is Proline--tRNA ligase from Methanocorpusculum labreanum (strain ATCC 43576 / DSM 4855 / Z).